Here is a 550-residue protein sequence, read N- to C-terminus: Glucose-6-phosphate isomerase (550 aa).

E356 functions as the Proton donor in the catalytic mechanism. Catalysis depends on residues H387 and K515.

This sequence belongs to the GPI family.

The protein localises to the cytoplasm. The catalysed reaction is alpha-D-glucose 6-phosphate = beta-D-fructose 6-phosphate. The protein operates within carbohydrate biosynthesis; gluconeogenesis. It participates in carbohydrate degradation; glycolysis; D-glyceraldehyde 3-phosphate and glycerone phosphate from D-glucose: step 2/4. In terms of biological role, catalyzes the reversible isomerization of glucose-6-phosphate to fructose-6-phosphate. In Vibrio vulnificus (strain YJ016), this protein is Glucose-6-phosphate isomerase.